Consider the following 515-residue polypeptide: Cytochrome P450 monooxygenase nsrP (515 aa).

Residues Phe-20–Pro-40 form a helical membrane-spanning segment. 3 N-linked (GlcNAc...) asparagine glycosylation sites follow: Asn-84, Asn-406, and Asn-411. Heme is bound at residue Cys-452.

This sequence belongs to the cytochrome P450 family. It depends on heme as a cofactor.

It is found in the membrane. It functions in the pathway secondary metabolite biosynthesis. Its function is as follows. Cytochrome P450 monooxygenase; part of the gene cluster that mediates the biosynthesis of the tetrahydroxanthone dimer neosartorin, which exhibits antibacterial activity. The two different monomeric units appear to be synthesized by the same set of enzymes, among which the Baeyer-Villiger monooxygenase nsrF is the key enzyme for the divergence of the biosynthetic routes. The pathway begins with the synthesis of atrochrysone thioester by the polyketide synthase nsrB. The atrochrysone carboxyl ACP thioesterase nsrC then breaks the thioester bond and releases the atrochrysone carboxylic acid from AacuL. Atrochrysone carboxylic acid is decarboxylated by the decarboxylase nsrE, and oxidized by the anthrone oxygenase nsrD to yield emodin. Emodin is then reduced to emodin hydroquinone by the oxidoreductase nsrR. A-ring reduction by the short chain dehydrogenase nsrJ, dehydration by the scytalone dehydratase-like protein nsrI and probable spontaneous re-oxidation, results in overall deoxygenation to chrysophanol. The Baeyer-Villiger monooxygenase nsrF accepts chrysophanol as a substrate to insert one oxygen atom at two different positions to yield the precursors of both monomric units. NsrF is promiscuous/flexible in interacting with the 2 (non methylated and methylated) aromatic rings of chrysophanol, thus diverging the biosynthetic pathway at this point. After the hydrolysis of the lactones, methylesterification by the methyltransferase nsrG yields respectively moniliphenone and 2,2',6'-trihydroxy-4-methyl-6-methoxya-cyldiphenylmethanone. The next steps are the hydroxylation by the FAD-dependent monooxygenase nsrK, followed by isomerization by the monooxygenase nsrQ. The short chain dehydrogenase/reductase nsrO then catalyzes the C-5 ketoreduction to give the xanthone skeleton of blennolide C and 5-acetylblennolide A. The acetyltransferase nsrL has a strict substrate specificity and uses only blennolide A but not blennolide C to yield 5-acetylblennolide A as the single-acetylated product. In the final step of the biosynthesis, the heterodimerization of the 2 xanthones, blennolide C and 5-acetylblennolide A, is catalyzed by the cytochrome P450 monooxygenase nsrP. NsrP can utilize at least three different xanthones as its substrates to perform the dimerization reaction. This Aspergillus novofumigatus (strain IBT 16806) protein is Cytochrome P450 monooxygenase nsrP.